A 165-amino-acid chain; its full sequence is MDALRLPRRPGVLLPKLILLFVYAGDCLAQCGKECHSYCCDGSTPYCCSYYAYIGNILSGTAIAGIVFGIVFIMGVIAGIAICICMCMKNNRGTRVGVIRAAHINAISYPMAPPPYTYDHEMEYRTDLPPPYSAAPQASAQRSPPPPYPGNPRKYSSSQNRIRDN.

Residues Met1–Ala29 form the signal peptide. Topologically, residues Gln30–Thr61 are extracellular. Residues Ala62–Ile82 traverse the membrane as a helical segment. Over Cys83 to Asn165 the chain is Cytoplasmic. Residues Arg125–Asn165 are disordered. Residues Lys154–Asn165 show a composition bias toward polar residues.

The protein belongs to the CYYR1 family.

The protein localises to the membrane. The protein is Cysteine and tyrosine-rich protein 1 (Cyyr1) of Mus musculus (Mouse).